We begin with the raw amino-acid sequence, 1457 residues long: Bridge-like lipid transfer protein family member 3B (1457 aa).

Residues 3-94 (GIIKKQILKH…DKVIMEMSTC (92 aa)) form the Chorein N-terminal domain. Disordered stretches follow at residues 267 to 295 (STEQ…KTPQ) and 409 to 449 (DRNL…PQPS). Polar residues predominate over residues 278-295 (PTQSSTVTSSAQHVKTPQ). Serine 414, serine 418, serine 774, and serine 934 each carry phosphoserine. Disordered regions lie at residues 975 to 1038 (SEDE…TGKG), 1056 to 1099 (ASLS…LSVS), and 1145 to 1183 (SNTS…TQEN). Positions 980–995 (SGLSHKSGSGEMTSEG) are enriched in polar residues. Serine 1008 carries the phosphoserine modification. A compositionally biased stretch (polar residues) spans 1145 to 1180 (SNTSCQSPAESVNTSANTQTCGEASPEAVSTNSEGT). The stretch at 1410–1455 (ANFLDITREQLMEENECLRQRLAQAKMELAEAHSARDELLHQMKRM) forms a coiled coil.

In terms of assembly, homodimer (via N-terminus). Associates with the Golgi-associated retrograde protein (GARP) complex. Interacts with GARP complex component VPS52. Interacts (via C-terminal coiled-coil domain) with STX6.

It is found in the cytoplasm. The protein resides in the cytosol. It localises to the early endosome. In terms of biological role, tube-forming lipid transport protein which mediates the transfer of lipids between membranes at organelle contact sites. Required for retrograde traffic of vesicle clusters in the early endocytic pathway to the Golgi complex. The sequence is that of Bridge-like lipid transfer protein family member 3B (Bltp3b) from Mus musculus (Mouse).